The primary structure comprises 132 residues: Small ribosomal subunit protein uS11 (132 aa).

This sequence belongs to the universal ribosomal protein uS11 family. As to quaternary structure, part of the 30S ribosomal subunit.

In terms of biological role, located on the platform of the 30S subunit. The protein is Small ribosomal subunit protein uS11 of Caldivirga maquilingensis (strain ATCC 700844 / DSM 13496 / JCM 10307 / IC-167).